Here is an 849-residue protein sequence, read N- to C-terminus: Cytosolic phospholipase A2 zeta (849 aa).

Positions 27-145 (EKRGPLWRHW…KCGQPHKHTF (119 aa)) constitute a C2 domain. Asp60, Asp66, Asp116, Asp118, and Asp123 together coordinate Ca(2+). Residues 306 to 849 (EMSSGDLDLR…RHQARERAGA (544 aa)) enclose the PLA2c domain. Catalysis depends on Ser395, which acts as the Nucleophile. Residue Asp680 is the Proton acceptor of the active site.

The cofactor is Ca(2+). In terms of tissue distribution, expressed in myocardium (at protein level).

The protein localises to the cytoplasm. Its subcellular location is the cytosol. The protein resides in the cell membrane. It localises to the mitochondrion. It carries out the reaction a 1,2-diacyl-sn-glycero-3-phosphocholine + H2O = a 1-acyl-sn-glycero-3-phosphocholine + a fatty acid + H(+). It catalyses the reaction a 1-O-alkyl-2-acyl-sn-glycero-3-phosphocholine + H2O = a 1-O-alkyl-sn-glycero-3-phosphocholine + a fatty acid + H(+). The enzyme catalyses 1-hexadecanoyl-2-(9Z-octadecenoyl)-sn-glycero-3-phosphocholine + H2O = 2-(9Z-octadecenoyl)-sn-glycero-3-phosphocholine + hexadecanoate + H(+). The catalysed reaction is 1-hexadecanoyl-2-(9Z,12Z-octadecadienoyl)-sn-glycero-3-phosphocholine + H2O = (9Z,12Z)-octadecadienoate + 1-hexadecanoyl-sn-glycero-3-phosphocholine + H(+). It carries out the reaction 1-hexadecanoyl-2-(5Z,8Z,11Z,14Z-eicosatetraenoyl)-sn-glycero-3-phosphocholine + H2O = 1-hexadecanoyl-sn-glycero-3-phosphocholine + (5Z,8Z,11Z,14Z)-eicosatetraenoate + H(+). It catalyses the reaction 1-hexadecanoyl-2-(9Z,12Z-octadecadienoyl)-sn-glycero-3-phosphoethanolamine + H2O = 1-hexadecanoyl-sn-glycero-3-phosphoethanolamine + (9Z,12Z)-octadecadienoate + H(+). The enzyme catalyses 1-hexadecanoyl-2-(5Z,8Z,11Z,14Z-eicosatetraenoyl)-sn-glycero-3-phosphoethanolamine + H2O = 1-hexadecanoyl-sn-glycero-3-phosphoethanolamine + (5Z,8Z,11Z,14Z)-eicosatetraenoate + H(+). The catalysed reaction is 1-(5Z,8Z,11Z,14Z-eicosatetraenoyl)-2-O-hexadecyl-sn-glycero-3-phosphocholine + H2O = 2-O-hexadecyl-sn-glycero-3-phosphocholine + (5Z,8Z,11Z,14Z)-eicosatetraenoate + H(+). It carries out the reaction 1-O-hexadecyl-2-(5Z,8Z,11Z,14Z)-eicosatetraenoyl-sn-glycero-3-phosphocholine + H2O = 1-O-hexadecyl-sn-glycero-3-phosphocholine + (5Z,8Z,11Z,14Z)-eicosatetraenoate + H(+). It catalyses the reaction 1-hexadecanoyl-sn-glycero-3-phosphocholine + H2O = sn-glycerol 3-phosphocholine + hexadecanoate + H(+). With respect to regulation, stimulated by cytosolic Ca(2+). Has calcium-dependent phospholipase and lysophospholipase activities with a potential role in membrane lipid remodeling and biosynthesis of lipid mediators. Preferentially hydrolyzes the ester bond of the fatty acyl group attached at sn-2 position of phospholipids (phospholipase A2 activity). Selectively hydrolyzes sn-2 arachidonoyl group from membrane phospholipids, providing the precursor for eicosanoid biosynthesis. In myocardial mitochondria, plays a major role in arachidonate release that is metabolically channeled to the formation of cardioprotective eicosanoids, epoxyeicosatrienoates (EETs). The protein is Cytosolic phospholipase A2 zeta (PLA2G4F) of Homo sapiens (Human).